The sequence spans 224 residues: GrpE protein homolog 2, mitochondrial (224 aa).

A mitochondrion-targeting transit peptide spans 1–31 (MAARSLWAVQRLQRLLASGAMSESRGWLHPF). Lysine 141 carries the N6-acetyllysine modification.

This sequence belongs to the GrpE family. In terms of assembly, probable component of the PAM complex at least composed of a mitochondrial HSP70 protein, GRPEL1 or GRPEL2, TIMM44, TIMM16/PAM16 and TIMM14/DNAJC19. In terms of tissue distribution, ubiquitous.

It is found in the mitochondrion matrix. Functionally, essential component of the PAM complex, a complex required for the translocation of transit peptide-containing proteins from the inner membrane into the mitochondrial matrix in an ATP-dependent manner. Seems to control the nucleotide-dependent binding of mitochondrial HSP70 to substrate proteins. Stimulates ATPase activity of mt-HSP70. May also serve to modulate the interconversion of oligomeric (inactive) and monomeric (active) forms of mt-HSP70. This Mus musculus (Mouse) protein is GrpE protein homolog 2, mitochondrial (Grpel2).